The sequence spans 423 residues: Glutamyl-tRNA(Gln) amidotransferase subunit A (423 aa).

Residues Lys28 and Ser103 each act as charge relay system in the active site. The active-site Acyl-ester intermediate is Ser127.

This sequence belongs to the amidase family. GatA subfamily. Heterotrimer of A, B and C subunits.

It catalyses the reaction L-glutamyl-tRNA(Gln) + L-glutamine + ATP + H2O = L-glutaminyl-tRNA(Gln) + L-glutamate + ADP + phosphate + H(+). In terms of biological role, allows the formation of correctly charged Gln-tRNA(Gln) through the transamidation of misacylated Glu-tRNA(Gln) in organisms which lack glutaminyl-tRNA synthetase. The reaction takes place in the presence of glutamine and ATP through an activated gamma-phospho-Glu-tRNA(Gln). The chain is Glutamyl-tRNA(Gln) amidotransferase subunit A from Halobacterium salinarum (strain ATCC 700922 / JCM 11081 / NRC-1) (Halobacterium halobium).